We begin with the raw amino-acid sequence, 145 residues long: D-aminoacyl-tRNA deacylase (145 aa).

The Gly-cisPro motif, important for rejection of L-amino acids motif lies at 137 to 138; that stretch reads GP.

It belongs to the DTD family. Homodimer.

It is found in the cytoplasm. The enzyme catalyses glycyl-tRNA(Ala) + H2O = tRNA(Ala) + glycine + H(+). It carries out the reaction a D-aminoacyl-tRNA + H2O = a tRNA + a D-alpha-amino acid + H(+). Its function is as follows. An aminoacyl-tRNA editing enzyme that deacylates mischarged D-aminoacyl-tRNAs. Also deacylates mischarged glycyl-tRNA(Ala), protecting cells against glycine mischarging by AlaRS. Acts via tRNA-based rather than protein-based catalysis; rejects L-amino acids rather than detecting D-amino acids in the active site. By recycling D-aminoacyl-tRNA to D-amino acids and free tRNA molecules, this enzyme counteracts the toxicity associated with the formation of D-aminoacyl-tRNA entities in vivo and helps enforce protein L-homochirality. The chain is D-aminoacyl-tRNA deacylase from Pseudomonas aeruginosa (strain UCBPP-PA14).